A 206-amino-acid chain; its full sequence is MLTLLRLDSSPLETSVSRALTDEFVAAWKAAHPDGVVIVRDLTLAPPPPVDAVWIGACFTPPPQRTAEQNDRLALSDAFLEELERADEYAIGVAMHNFSIPAVLKLWIDQVVRVGRTFAYSDGRPQGLLQGKKATILAATGGVYSAGTPAEGMNFLDPYLKTVLGFLGVRDIQVVTAGGTSQLRNPDVDREAFLEPVLQRVRETAA.

FMN contacts are provided by residues S10 and 15-17 (SVS).

It belongs to the azoreductase type 1 family. Homodimer. The cofactor is FMN.

The enzyme catalyses 2 a quinone + NADH + H(+) = 2 a 1,4-benzosemiquinone + NAD(+). The catalysed reaction is N,N-dimethyl-1,4-phenylenediamine + anthranilate + 2 NAD(+) = 2-(4-dimethylaminophenyl)diazenylbenzoate + 2 NADH + 2 H(+). Quinone reductase that provides resistance to thiol-specific stress caused by electrophilic quinones. In terms of biological role, also exhibits azoreductase activity. Catalyzes the reductive cleavage of the azo bond in aromatic azo compounds to the corresponding amines. In Acidobacterium capsulatum (strain ATCC 51196 / DSM 11244 / BCRC 80197 / JCM 7670 / NBRC 15755 / NCIMB 13165 / 161), this protein is FMN-dependent NADH:quinone oxidoreductase.